A 449-amino-acid chain; its full sequence is Glucose-6-phosphate isomerase (449 aa).

Catalysis depends on glutamate 290, which acts as the Proton donor. Catalysis depends on residues histidine 311 and lysine 425.

The protein belongs to the GPI family.

The protein resides in the cytoplasm. It catalyses the reaction alpha-D-glucose 6-phosphate = beta-D-fructose 6-phosphate. It participates in carbohydrate biosynthesis; gluconeogenesis. It functions in the pathway carbohydrate degradation; glycolysis; D-glyceraldehyde 3-phosphate and glycerone phosphate from D-glucose: step 2/4. Catalyzes the reversible isomerization of glucose-6-phosphate to fructose-6-phosphate. The polypeptide is Glucose-6-phosphate isomerase (Clostridium tetani (strain Massachusetts / E88)).